Here is a 597-residue protein sequence, read N- to C-terminus: ATP-dependent lipid A-core flippase (597 aa).

Helical transmembrane passes span 26–46, 76–96, 138–158, 164–184, 263–283, and 292–312; these read LWPY…AMAV, WFVP…QYAS, AIVF…VTLV, VVFL…IVAV, QPLT…IAVV, and VGGF…LKHL. Positions 38–321 constitute an ABC transmembrane type-1 domain; it reads IGAIVAMAVS…LMDVNQPLQR (284 aa). The 238-residue stretch at 353–590 folds into the ABC transporter domain; sequence VEFRDVSFVY…DGLYAHLHRI (238 aa). ATP is bound at residue 390–397; sequence GPSGSGKT.

This sequence belongs to the ABC transporter superfamily. Lipid exporter (TC 3.A.1.106) family. As to quaternary structure, homodimer.

It is found in the cell inner membrane. The catalysed reaction is ATP + H2O + lipid A-core oligosaccharideSide 1 = ADP + phosphate + lipid A-core oligosaccharideSide 2.. Its function is as follows. Involved in lipopolysaccharide (LPS) biosynthesis. Translocates lipid A-core from the inner to the outer leaflet of the inner membrane. Transmembrane domains (TMD) form a pore in the inner membrane and the ATP-binding domain (NBD) is responsible for energy generation. The chain is ATP-dependent lipid A-core flippase from Paraburkholderia xenovorans (strain LB400).